The primary structure comprises 272 residues: CD40 ligand (272 aa).

Residues 1-23 are Cytoplasmic-facing; sequence MNEAYSPAAPRPMGSTSPSTMKM. The helical; Signal-anchor for type II membrane protein transmembrane segment at 24–44 threads the bilayer; the sequence is FMCFLSVFMVVQTIGTVLFCL. Topologically, residues 45 to 272 are extracellular; sequence YLHMKMDKME…GNTYFGMFKL (228 aa). N124 and N146 each carry an N-linked (GlcNAc...) asparagine glycan. The region spanning 136–272 is the THD domain; it reads IATHLAGVKS…GNTYFGMFKL (137 aa). A disulfide bond links C190 and C229. A glycan (N-linked (GlcNAc...) asparagine) is linked at N251.

The protein belongs to the tumor necrosis factor family. As to quaternary structure, homotrimer. Interacts with CD28. CD40 ligand, soluble form: Exists as either a monomer or a homotrimer. Forms a ternary complex between CD40 and integrins for CD40-CD40LG signaling. In terms of processing, the soluble form derives from the membrane form by proteolytic processing.

It is found in the cell membrane. Its subcellular location is the cell surface. It localises to the secreted. Functionally, cytokine that acts as a ligand to CD40/TNFRSF5. Costimulates T-cell proliferation and cytokine production. Induces the activation of NF-kappa-B. Mediates B-cell proliferation in the absence of co-stimulus as well as IgE production in the presence of IL4. Involved in immunoglobulin class switching. In terms of biological role, acts as a ligand for integrins, specifically ITGA5:ITGB1 and ITGAV:ITGB3; both integrins and the CD40 receptor are required for activation of CD40-CD40LG signaling, which have cell-type dependent effects, such as B-cell activation, NF-kappa-B signaling and anti-apoptotic signaling. The protein is CD40 ligand (CD40LG) of Gallus gallus (Chicken).